Consider the following 1009-residue polypeptide: Type VII secretion system accessory factor EsaA (1009 aa).

A run of 6 helical transmembrane segments spans residues 7–27 (IYAL…IFFV), 822–842 (ISPT…AYIF), 869–889 (VITS…VGLI), 903–923 (KFIL…TYLL), 928–948 (SIGM…MNNL), and 979–999 (IGLA…LNMF).

The protein belongs to the EsaA family. In terms of assembly, homodimer. Interacts with EssB.

It is found in the cell membrane. In terms of biological role, component of the type VII secretion system (Ess). Provides together with EssB and other components such as EssC and EssE a secretion platform across the cytoplasmic membrane in the host. The protein is Type VII secretion system accessory factor EsaA of Staphylococcus aureus (strain Mu50 / ATCC 700699).